We begin with the raw amino-acid sequence, 143 residues long: Large ribosomal subunit protein uL13 (143 aa).

This sequence belongs to the universal ribosomal protein uL13 family. As to quaternary structure, part of the 50S ribosomal subunit.

This protein is one of the early assembly proteins of the 50S ribosomal subunit, although it is not seen to bind rRNA by itself. It is important during the early stages of 50S assembly. This Desulfitobacterium hafniense (strain DSM 10664 / DCB-2) protein is Large ribosomal subunit protein uL13.